A 52-amino-acid polypeptide reads, in one-letter code: Large ribosomal subunit protein bL32c (52 aa).

The protein belongs to the bacterial ribosomal protein bL32 family.

The protein resides in the plastid. The protein localises to the chloroplast. The sequence is that of Large ribosomal subunit protein bL32c from Olimarabidopsis pumila (Dwarf rocket).